Consider the following 831-residue polypeptide: Cadherin-related family member 5 (831 aa).

The N-terminal stretch at 1 to 28 (MGAPALLWPSLLLPWLTVLFGQPPGTLA) is a signal peptide. Residues 29–641 (QTQVCSVNQT…GQRFSTVDMA (613 aa)) are Extracellular-facing. Residues N36, N45, N84, N135, N143, N173, N201, N287, N311, N408, and N475 are each glycosylated (N-linked (GlcNAc...) asparagine). 4 Cadherin domains span residues 53–125 (VNIF…DNAP), 128–240 (SFEI…TPWF), 252–357 (IHAQ…PLQF), and 358–459 (SQSL…ERER). The disordered stretch occupies residues 452-632 (IQVSERERTP…STGAGEQGDG (181 aa)). The span at 473–491 (SSNTTMEAPLTSGTSQRPA) shows a compositional bias: polar residues. Low complexity predominate over residues 505 to 540 (GGTTLRPPTPASSIPGGSPTLGTSTSPQTTTPGGDS). Polar residues predominate over residues 541–554 (AQTPKPGTSHPTAP). 2 repeat units span residues 541 to 571 (AQTPKPGTSHPTAPTSRTSTSLMTTSSRSDS) and 572 to 602 (TQTPKPGTSQPMVPIPGASTSSQPATPSGSS). The segment at 541–614 (AQTPKPGTSH…TPKPGTSQST (74 aa)) is 3 X 31 AA approximate tandem repeats. The span at 555–572 (TSRTSTSLMTTSSRSDST) shows a compositional bias: low complexity. Polar residues-rich tracts occupy residues 573–582 (QTPKPGTSQP) and 589–623 (ASTSSQPATPSGSSPQTPKPGTSQSTATGPISLPS). A 3; truncated repeat occupies 605-614 (TPKPGTSQST). A helical transmembrane segment spans residues 642-662 (VLGGVLGALLLLALICLVILV). At 663-831 (HKHYRHRLAC…FGVDADNTYI (169 aa)) the chain is on the cytoplasmic side. The interval 663–831 (HKHYRHRLAC…FGVDADNTYI (169 aa)) is mediates interaction with USH1C and MYO7B and is required for proper localization to microvilli tips and function in microvilli organization. 2 disordered regions span residues 675 to 774 (GKAS…GGYK) and 793 to 831 (EPTADVDSASASGSEGSDDDDPDQKKTLRFGVDADNTYI). Phosphoserine occurs at positions 699, 721, and 725. A compositionally biased stretch (pro residues) spans 716–738 (PLRPPSPMSSSPTPPSSTPPSPQ). Residue T728 is modified to Phosphothreonine. A phosphoserine mark is found at S736 and S753. Positions 761 to 771 (LTKERRPEGEG) are enriched in basic and acidic residues. T795 bears the Phosphothreonine mark. The segment covering 797 to 807 (DVDSASASGSE) has biased composition (low complexity). S802, S804, and S806 each carry phosphoserine.

Part of the IMAC/intermicrovillar adhesion complex/intermicrovillar tip-link complex composed of ANKS4B, MYO7B, USH1C, CDHR2 and CDHR5. Interacts (via cytoplasmic domain) with USH1C and MYO7B; required for proper localization of CDHR5 to microvilli tips and its function in brush border differentiation. In terms of processing, N- and O-glycosylated.

It is found in the apical cell membrane. The protein localises to the cell projection. Its subcellular location is the microvillus membrane. Functionally, intermicrovillar adhesion molecule that forms, via its extracellular domain, calcium-dependent heterophilic complexes with CDHR2 on adjacent microvilli. Thereby, controls the packing of microvilli at the apical membrane of epithelial cells. Through its cytoplasmic domain, interacts with microvillus cytoplasmic proteins to form the intermicrovillar adhesion complex/IMAC. This complex plays a central role in microvilli and epithelial brush border differentiation. The sequence is that of Cadherin-related family member 5 from Mus musculus (Mouse).